The chain runs to 388 residues: uncharacterized protein (388 aa).

Residues 68–96 (KVDRMSEEEERMAIATRKAKEVAKELSET) adopt a coiled-coil conformation. The interval 162-388 (GSHPLVREFN…PPQQDWFDSV (227 aa)) is disordered. Composition is skewed to basic and acidic residues over residues 166-176 (LVREFNGEKPP) and 196-208 (ATDK…QSDK). Residues 233 to 251 (GVKHQHAIRRDDRHRHGMR) are compositionally biased toward basic residues. Low complexity-rich tracts occupy residues 265 to 279 (QQQQ…SRGQ) and 293 to 346 (QRRP…QRPA).

This is an uncharacterized protein from Frog virus 3 (isolate Goorha) (FV-3).